The primary structure comprises 205 residues: Holliday junction branch migration complex subunit RuvA (205 aa).

The interval 1 to 64 is domain I; the sequence is MIGKLKGTID…EDQLKLFGFL (64 aa). Residues 65 to 143 are domain II; that stretch reads SALEREWFRL…AFSGEMAPSI (79 aa). The segment at 144–153 is flexible linker; it reads GLKQELGEGV. The segment at 153 to 205 is domain III; sequence VAAAPVADAVSALTNLGYSRDQAANAVAAALKNGGEGGDSAKLIRLGLKELSR.

The protein belongs to the RuvA family. As to quaternary structure, homotetramer. Forms an RuvA(8)-RuvB(12)-Holliday junction (HJ) complex. HJ DNA is sandwiched between 2 RuvA tetramers; dsDNA enters through RuvA and exits via RuvB. An RuvB hexamer assembles on each DNA strand where it exits the tetramer. Each RuvB hexamer is contacted by two RuvA subunits (via domain III) on 2 adjacent RuvB subunits; this complex drives branch migration. In the full resolvosome a probable DNA-RuvA(4)-RuvB(12)-RuvC(2) complex forms which resolves the HJ.

The protein localises to the cytoplasm. Functionally, the RuvA-RuvB-RuvC complex processes Holliday junction (HJ) DNA during genetic recombination and DNA repair, while the RuvA-RuvB complex plays an important role in the rescue of blocked DNA replication forks via replication fork reversal (RFR). RuvA specifically binds to HJ cruciform DNA, conferring on it an open structure. The RuvB hexamer acts as an ATP-dependent pump, pulling dsDNA into and through the RuvAB complex. HJ branch migration allows RuvC to scan DNA until it finds its consensus sequence, where it cleaves and resolves the cruciform DNA. This chain is Holliday junction branch migration complex subunit RuvA, found in Rhizobium meliloti (strain 1021) (Ensifer meliloti).